Here is a 381-residue protein sequence, read N- to C-terminus: N-acetyldiaminopimelate deacetylase (381 aa).

Residue aspartate 71 is part of the active site. Residue glutamate 130 is the Proton acceptor of the active site.

This sequence belongs to the peptidase M20A family. N-acetyldiaminopimelate deacetylase subfamily.

The enzyme catalyses N-acetyl-(2S,6S)-2,6-diaminopimelate + H2O = (2S,6S)-2,6-diaminopimelate + acetate. Its pathway is amino-acid biosynthesis; L-lysine biosynthesis via DAP pathway; LL-2,6-diaminopimelate from (S)-tetrahydrodipicolinate (acetylase route): step 3/3. In terms of biological role, catalyzes the conversion of N-acetyl-diaminopimelate to diaminopimelate and acetate. The polypeptide is N-acetyldiaminopimelate deacetylase (Ligilactobacillus salivarius (strain UCC118) (Lactobacillus salivarius)).